Reading from the N-terminus, the 117-residue chain is Immunoglobulin heavy variable 1-3 (117 aa).

The N-terminal stretch at 1–19 (MDWTWRILFLVAAATGAHS) is a signal peptide. Positions 20-44 (QVQLVQSGAEVKKPGASVKVSCKAS) are framework-1. Positions 20–117 (QVQLVQSGAE…EDTAVYYCAR (98 aa)) constitute an Ig-like domain. Cysteines 41 and 115 form a disulfide. Residues 45 to 52 (GYTFTSYA) form a complementarity-determining-1 region. Residues 53 to 69 (MHWVRQAPGQRLEWMGW) form a framework-2 region. The segment at 70 to 77 (INAGNGNT) is complementarity-determining-2. Residues 78-115 (KYSQKFQGRVTITRDTSASTAYMELSSLRSEDTAVYYC) form a framework-3 region. Residues 116–117 (AR) are complementarity-determining-3.

As to quaternary structure, immunoglobulins are composed of two identical heavy chains and two identical light chains; disulfide-linked.

It localises to the secreted. It is found in the cell membrane. Functionally, v region of the variable domain of immunoglobulin heavy chains that participates in the antigen recognition. Immunoglobulins, also known as antibodies, are membrane-bound or secreted glycoproteins produced by B lymphocytes. In the recognition phase of humoral immunity, the membrane-bound immunoglobulins serve as receptors which, upon binding of a specific antigen, trigger the clonal expansion and differentiation of B lymphocytes into immunoglobulins-secreting plasma cells. Secreted immunoglobulins mediate the effector phase of humoral immunity, which results in the elimination of bound antigens. The antigen binding site is formed by the variable domain of one heavy chain, together with that of its associated light chain. Thus, each immunoglobulin has two antigen binding sites with remarkable affinity for a particular antigen. The variable domains are assembled by a process called V-(D)-J rearrangement and can then be subjected to somatic hypermutations which, after exposure to antigen and selection, allow affinity maturation for a particular antigen. In Homo sapiens (Human), this protein is Immunoglobulin heavy variable 1-3.